The chain runs to 506 residues: Sodium-coupled neutral amino acid symporter 2 (506 aa).

The tract at residues 1–23 is disordered; that stretch reads MKKAEMGRFSISPDEDSSSYSSN. Topologically, residues 1–76 are cytoplasmic; sequence MKKAEMGRFS…HPGTTSFGMS (76 aa). The regulates protein turnover upon amino acid deprivation stretch occupies residues 1-96; sequence MKKAEMGRFS…SGILGLSYAM (96 aa). Phosphoserine is present on residues Ser-10, Ser-12, Ser-21, Ser-22, and Ser-55. A helical membrane pass occupies residues 77–96; that stretch reads VFNLSNAIVGSGILGLSYAM. Na(+) is bound at residue Asn-82. The Extracellular portion of the chain corresponds to 97–102; sequence ANTGIA. Residues 103 to 123 traverse the membrane as a helical segment; the sequence is LFIILLTFVSIFSLYSVHLLL. At 124–158 the chain is on the cytoplasmic side; the sequence is KTANEGGSLLYEQLGYKAFGLVGKLAASGSITMQN. Residues 159 to 177 traverse the membrane as a helical segment; sequence IGAMSSYLFIVKYELPLVI. Residues 178–188 lie on the Extracellular side of the membrane; sequence QALTNIEDKTG. The helical transmembrane segment at 189-209 threads the bilayer; sequence LWYLNGNYLVLLVSLVVILPL. Topologically, residues 210–217 are cytoplasmic; sequence SLFRNLGY. The helical transmembrane segment at 218–238 threads the bilayer; the sequence is LGYTSGLSLLCMVFFLIVVIC. Over 239–292 the chain is Extracellular; the sequence is KKFQVPCPVEAALIINETINTTLTQPTALVPALSHNVTENDSCRPHYFIFNSQT. Cys-245 and Cys-281 are joined by a disulfide. Asn-258 and Asn-274 each carry an N-linked (GlcNAc...) asparagine glycan. The chain crosses the membrane as a helical span at residues 293–313; the sequence is VYAVPILIFSFVCHPAVLPIY. The Cytoplasmic portion of the chain corresponds to 314–329; it reads EELKDRSRRRMMNVSK. The chain crosses the membrane as a helical span at residues 330–350; the sequence is ISFFAMFLMYLLAALFGYLTF. The Extracellular segment spans residues 351 to 371; that stretch reads YEHVESELLHTYSSILGTDIL. Residues 372-392 form a helical membrane-spanning segment; it reads LLIVRLAVLMAVTLTVPVVIF. Thr-386 contacts Na(+). The Cytoplasmic segment spans residues 393–413; that stretch reads PIRSSVTHLLCASKDFSWWRH. Residues 414-434 traverse the membrane as a helical segment; sequence SLITVSILAFTNLLVIFVPTI. Residues 435–436 lie on the Extracellular side of the membrane; sequence RD. The chain crosses the membrane as a helical span at residues 437–457; that stretch reads IFGFIGASAASMLIFILPSAF. The Cytoplasmic segment spans residues 458 to 472; sequence YIKLVKKEPMKSVQK. The chain crosses the membrane as a helical span at residues 473–495; it reads IGALFFLLSGVLVMTGSMALIVL. At 496-506 the chain is on the extracellular side; the sequence is DWVHNAPGGGH.

It belongs to the amino acid/polyamine transporter 2 family. Post-translationally, polyubiquitination by NEDD4L regulates the degradation and the activity of SLC38A2. Ubiquitously expressed. Expressed in neocortex. Widely expressed in the central nervous system with higher concentrations in caudal regions. Expressed by glutamatergic and GABAergic neurons together with astrocytes and other non-neuronal cells in the cerebral cortex (at protein level).

Its subcellular location is the cell membrane. The catalysed reaction is L-alanine(in) + Na(+)(in) = L-alanine(out) + Na(+)(out). It carries out the reaction glycine(in) + Na(+)(in) = glycine(out) + Na(+)(out). It catalyses the reaction L-serine(in) + Na(+)(in) = L-serine(out) + Na(+)(out). The enzyme catalyses L-proline(in) + Na(+)(in) = L-proline(out) + Na(+)(out). The catalysed reaction is L-methionine(in) + Na(+)(in) = L-methionine(out) + Na(+)(out). It carries out the reaction L-histidine(in) + Na(+)(in) = L-histidine(out) + Na(+)(out). It catalyses the reaction L-asparagine(in) + Na(+)(in) = L-asparagine(out) + Na(+)(out). The enzyme catalyses L-glutamine(in) + Na(+)(in) = L-glutamine(out) + Na(+)(out). The catalysed reaction is L-threonine(in) + Na(+)(in) = L-threonine(out) + Na(+)(out). It carries out the reaction L-leucine(in) + Na(+)(in) = L-leucine(out) + Na(+)(out). It catalyses the reaction L-phenylalanine(in) + Na(+)(in) = L-phenylalanine(out) + Na(+)(out). With respect to regulation, inhibited by N-methyl-D-glucamine. Inhibited by choline. Allosteric regulation of sodium ions binding by pH. In terms of biological role, symporter that cotransports neutral amino acids and sodium ions from the extracellular to the intracellular side of the cell membrane. The transport is pH-sensitive, Li(+)-intolerant, electrogenic, driven by the Na(+) electrochemical gradient and cotransports of neutral amino acids and sodium ions with a stoichiometry of 1:1. May function in the transport of amino acids at the blood-brain barrier. May function in the transport of amino acids in the supply of maternal nutrients to the fetus through the placenta. Maintains a key metabolic glutamine/glutamate balance underpinning retrograde signaling by dendritic release of the neurotransmitter glutamate. Transports L-proline in differentiating osteoblasts for the efficient synthesis of proline-enriched proteins and provides proline essential for osteoblast differentiation and bone formation during bone development. The protein is Sodium-coupled neutral amino acid symporter 2 of Homo sapiens (Human).